We begin with the raw amino-acid sequence, 267 residues long: Diphthine--ammonia ligase (267 aa).

Y97 carries the post-translational modification Phosphotyrosine.

This sequence belongs to the Diphthine--ammonia ligase family.

The enzyme catalyses diphthine-[translation elongation factor 2] + NH4(+) + ATP = diphthamide-[translation elongation factor 2] + AMP + diphosphate + H(+). It participates in protein modification; peptidyl-diphthamide biosynthesis. Amidase that catalyzes the last step of diphthamide biosynthesis using ammonium and ATP. Diphthamide biosynthesis consists in the conversion of an L-histidine residue in the translation elongation factor 2 (EEF2) to diphthamide. This is Diphthine--ammonia ligase (Dph6) from Mus musculus (Mouse).